The primary structure comprises 299 residues: Oxygen-dependent coproporphyrinogen-III oxidase (299 aa).

Ser92 is a binding site for substrate. 2 residues coordinate a divalent metal cation: His96 and His106. His106 (proton donor) is an active-site residue. 108-110 is a substrate binding site; that stretch reads NVR. Residues His145 and His175 each coordinate a divalent metal cation. Residues 240-275 are important for dimerization; the sequence is YVEFNLVWDRGTLFGLQTGGRTESILMSMPPLVRWE. Position 258-260 (258-260) interacts with substrate; sequence GGR.

It belongs to the aerobic coproporphyrinogen-III oxidase family. As to quaternary structure, homodimer. A divalent metal cation serves as cofactor.

It localises to the cytoplasm. It catalyses the reaction coproporphyrinogen III + O2 + 2 H(+) = protoporphyrinogen IX + 2 CO2 + 2 H2O. Its pathway is porphyrin-containing compound metabolism; protoporphyrin-IX biosynthesis; protoporphyrinogen-IX from coproporphyrinogen-III (O2 route): step 1/1. Involved in the heme biosynthesis. Catalyzes the aerobic oxidative decarboxylation of propionate groups of rings A and B of coproporphyrinogen-III to yield the vinyl groups in protoporphyrinogen-IX. The polypeptide is Oxygen-dependent coproporphyrinogen-III oxidase (Salmonella heidelberg (strain SL476)).